The primary structure comprises 310 residues: S-methyl-5'-thioadenosine phosphorylase (310 aa).

Phosphate is bound by residues Thr-20, 62-63 (RH), and 95-96 (SA). Met-197 serves as a coordination point for substrate. Ser-198 contacts phosphate. Residue 221–223 (DYD) coordinates substrate.

This sequence belongs to the PNP/MTAP phosphorylase family. MTAP subfamily. As to quaternary structure, homotrimer.

Its subcellular location is the cytoplasm. The protein resides in the nucleus. The enzyme catalyses S-methyl-5'-thioadenosine + phosphate = 5-(methylsulfanyl)-alpha-D-ribose 1-phosphate + adenine. It functions in the pathway amino-acid biosynthesis; L-methionine biosynthesis via salvage pathway; S-methyl-5-thio-alpha-D-ribose 1-phosphate from S-methyl-5'-thioadenosine (phosphorylase route): step 1/1. Catalyzes the reversible phosphorylation of S-methyl-5'-thioadenosine (MTA) to adenine and 5-methylthioribose-1-phosphate. Involved in the breakdown of MTA, a major by-product of polyamine biosynthesis. Responsible for the first step in the methionine salvage pathway after MTA has been generated from S-adenosylmethionine. Has broad substrate specificity with 6-aminopurine nucleosides as preferred substrates. This Neurospora crassa (strain ATCC 24698 / 74-OR23-1A / CBS 708.71 / DSM 1257 / FGSC 987) protein is S-methyl-5'-thioadenosine phosphorylase.